The chain runs to 430 residues: Glutamate-1-semialdehyde 2,1-aminomutase 2 (430 aa).

K269 carries the N6-(pyridoxal phosphate)lysine modification.

Belongs to the class-III pyridoxal-phosphate-dependent aminotransferase family. HemL subfamily. Homodimer. The cofactor is pyridoxal 5'-phosphate.

Its subcellular location is the cytoplasm. It carries out the reaction (S)-4-amino-5-oxopentanoate = 5-aminolevulinate. The protein operates within porphyrin-containing compound metabolism; protoporphyrin-IX biosynthesis; 5-aminolevulinate from L-glutamyl-tRNA(Glu): step 2/2. The polypeptide is Glutamate-1-semialdehyde 2,1-aminomutase 2 (Lysinibacillus sphaericus (strain C3-41)).